A 151-amino-acid chain; its full sequence is Inactive oocyte-specific homeobox protein 2 (151 aa).

The tract at residues Met-1–Glu-97 is disordered. Residues Met-37 to Ser-54 are compositionally biased toward polar residues.

The protein belongs to the paired homeobox family. Obox subfamily. Specifically expressed in oocytes and early embryos.

In contrast to other Obox family proteins, displays a truncated homeobox domain and does not bind DNA. The sequence is that of Inactive oocyte-specific homeobox protein 2 from Mus musculus (Mouse).